A 225-amino-acid polypeptide reads, in one-letter code: Cytidylate kinase (225 aa).

11-19 is a binding site for ATP; that stretch reads GPAAAGKST.

The protein belongs to the cytidylate kinase family. Type 1 subfamily.

Its subcellular location is the cytoplasm. The enzyme catalyses CMP + ATP = CDP + ADP. The catalysed reaction is dCMP + ATP = dCDP + ADP. The polypeptide is Cytidylate kinase (Bacillus cereus (strain G9842)).